The primary structure comprises 135 residues: ATP synthase epsilon chain (135 aa).

A compositionally biased stretch (basic and acidic residues) spans 90–103; it reads DVRRAESAKERAES. Residues 90–115 are disordered; the sequence is DVRRAESAKERAESHLNNNDEDTDIN.

The protein belongs to the ATPase epsilon chain family. As to quaternary structure, F-type ATPases have 2 components, CF(1) - the catalytic core - and CF(0) - the membrane proton channel. CF(1) has five subunits: alpha(3), beta(3), gamma(1), delta(1), epsilon(1). CF(0) has three main subunits: a, b and c.

It is found in the cell membrane. In terms of biological role, produces ATP from ADP in the presence of a proton gradient across the membrane. This Staphylococcus carnosus (strain TM300) protein is ATP synthase epsilon chain.